The chain runs to 193 residues: uncharacterized protein (193 aa).

A coiled-coil region spans residues 86 to 181 (TKQRELLEIL…QVEEVQAEVG (96 aa)).

This is an uncharacterized protein from Streptococcus pyogenes serotype M6 (strain ATCC BAA-946 / MGAS10394).